A 176-amino-acid polypeptide reads, in one-letter code: RNA polymerase sigma factor SigO (176 aa).

The Polymerase core binding motif lies at 30 to 43 (DARSLDELFKQFYK). The segment at residues 139–158 (MQEIADSLGESRQNISNIHK) is a DNA-binding region (H-T-H motif).

Belongs to the sigma-70 factor family. Interacts with RNA polymerase.

In terms of biological role, sigma factors are initiation factors that promote the attachment of RNA polymerase to specific initiation sites and are then released. Together with its coactivator RsoA, positively regulates the expression of at least three operons, including oxdC-yvrL, sigO-rsoA and yvrJ. Required for the acid stress-dependent induction of the oxalate decarboxylase oxdC. The sequence is that of RNA polymerase sigma factor SigO (sigO) from Bacillus subtilis (strain 168).